A 463-amino-acid polypeptide reads, in one-letter code: Membrane-bound lytic murein transglycosylase F (463 aa).

The signal sequence occupies residues 1–33; sequence MQSQDYKKRLKLQIIIILSIAVMSCGVPNVPTA. The segment at 34 to 272 is non-LT domain; it reads LSSLLERESI…VLEDKYFGHI (239 aa). The segment at 273-463 is LT domain; it reads RQFDYVDSRA…LVWLDEQGKI (191 aa). The active site involves Glu317.

The protein in the N-terminal section; belongs to the bacterial solute-binding protein 3 family. This sequence in the C-terminal section; belongs to the transglycosylase Slt family.

It is found in the cell outer membrane. It carries out the reaction Exolytic cleavage of the (1-&gt;4)-beta-glycosidic linkage between N-acetylmuramic acid (MurNAc) and N-acetylglucosamine (GlcNAc) residues in peptidoglycan, from either the reducing or the non-reducing ends of the peptidoglycan chains, with concomitant formation of a 1,6-anhydrobond in the MurNAc residue.. Its function is as follows. Murein-degrading enzyme that degrades murein glycan strands and insoluble, high-molecular weight murein sacculi, with the concomitant formation of a 1,6-anhydromuramoyl product. Lytic transglycosylases (LTs) play an integral role in the metabolism of the peptidoglycan (PG) sacculus. Their lytic action creates space within the PG sacculus to allow for its expansion as well as for the insertion of various structures such as secretion systems and flagella. In Alteromonas mediterranea (strain DSM 17117 / CIP 110805 / LMG 28347 / Deep ecotype), this protein is Membrane-bound lytic murein transglycosylase F.